Consider the following 329-residue polypeptide: Glycerol-3-phosphate dehydrogenase [NAD(P)+] (329 aa).

The NADPH site is built by Ser10, Trp11, Arg31, and Lys105. Residues Lys105, Gly134, and Ser136 each contribute to the sn-glycerol 3-phosphate site. NADPH is bound at residue Ala138. Positions 189, 242, 252, 253, and 254 each coordinate sn-glycerol 3-phosphate. The active-site Proton acceptor is the Lys189. Arg253 serves as a coordination point for NADPH. Residues Val277 and Glu279 each coordinate NADPH.

This sequence belongs to the NAD-dependent glycerol-3-phosphate dehydrogenase family.

The protein resides in the cytoplasm. It catalyses the reaction sn-glycerol 3-phosphate + NAD(+) = dihydroxyacetone phosphate + NADH + H(+). It carries out the reaction sn-glycerol 3-phosphate + NADP(+) = dihydroxyacetone phosphate + NADPH + H(+). It participates in membrane lipid metabolism; glycerophospholipid metabolism. Its function is as follows. Catalyzes the reduction of the glycolytic intermediate dihydroxyacetone phosphate (DHAP) to sn-glycerol 3-phosphate (G3P), the key precursor for phospholipid synthesis. In Neisseria gonorrhoeae (strain ATCC 700825 / FA 1090), this protein is Glycerol-3-phosphate dehydrogenase [NAD(P)+].